A 400-amino-acid chain; its full sequence is Serine/threonine transporter SstT (400 aa).

The next 10 helical transmembrane spans lie at 11–31 (IGLV…GWLA), 45–65 (FVGA…MAAI), 81–101 (IMYM…SFLF), 138–158 (AIAE…GFAL), 175–195 (AISQ…LGLV), 213–233 (ILMV…PLII), 242–264 (YPLV…SSAA), 295–315 (MAGA…TLGI), 327–347 (LVAT…LLLI), and 354–374 (FSIP…IGVI).

The protein belongs to the dicarboxylate/amino acid:cation symporter (DAACS) (TC 2.A.23) family.

The protein resides in the cell inner membrane. It carries out the reaction L-serine(in) + Na(+)(in) = L-serine(out) + Na(+)(out). The catalysed reaction is L-threonine(in) + Na(+)(in) = L-threonine(out) + Na(+)(out). Involved in the import of serine and threonine into the cell, with the concomitant import of sodium (symport system). This Psychrobacter cryohalolentis (strain ATCC BAA-1226 / DSM 17306 / VKM B-2378 / K5) protein is Serine/threonine transporter SstT.